The sequence spans 220 residues: Ribonuclease P protein component 3 (220 aa).

Belongs to the eukaryotic/archaeal RNase P protein component 3 family. Consists of a catalytic RNA component and at least 4-5 protein subunits.

It localises to the cytoplasm. The catalysed reaction is Endonucleolytic cleavage of RNA, removing 5'-extranucleotides from tRNA precursor.. Part of ribonuclease P, a protein complex that generates mature tRNA molecules by cleaving their 5'-ends. The polypeptide is Ribonuclease P protein component 3 (Thermococcus kodakarensis (strain ATCC BAA-918 / JCM 12380 / KOD1) (Pyrococcus kodakaraensis (strain KOD1))).